An 804-amino-acid polypeptide reads, in one-letter code: Zinc finger protein 541 (804 aa).

Disordered stretches follow at residues Ser21–Ile120 and Thr133–Arg197. The C2H2-type 1 zinc-finger motif lies at Phe285–His307. The segment at Met379 to His426 is disordered. Residues Glu380–Gln395 are compositionally biased toward basic and acidic residues. The segment covering Gln396 to Pro405 has biased composition (basic residues). An ELM2 domain is found at Pro509–Gly601. Residues Thr616–Lys667 enclose the SANT domain. The disordered stretch occupies residues Val680–Ser743. A compositionally biased stretch (basic and acidic residues) spans Thr690 to Ser721. The C2H2-type 2 zinc-finger motif lies at Phe747–His769.

As to quaternary structure, interacts with DNTTIP1. Identified in a complex with KCDT19, HDAC1 and HSPA2s. Component of a histone deacetylase complex containing DNTTIP1, ZNF541, HDAC1 and HDAC2. Identified in a complex with HDAC1, HDAC2, DNTTIP1 and KCTD19.

It is found in the nucleus. Functionally, transcription regulator which is essential for male fertility and for the completion of meiotic prophase in spermatocytes. Regulates progression of the pachytene stage of meiotic prophase by activating the expression of genes involved in meiosis and post-meiosis during spermatogenesis. Maintains the repression of pre-pachytene transcriptional programs, including meiotic double-strand breaks (DSB) formation genes in pachytene spermatocytes and suppresses aberrant DSB formation after mid-pachytene, thus ensuring meiosis progression. The polypeptide is Zinc finger protein 541 (ZNF541) (Macaca fascicularis (Crab-eating macaque)).